Consider the following 410-residue polypeptide: Dephospho-CoA kinase (410 aa).

The DPCK domain occupies 3-201 (CIGITGGIGA…HRILPFAYNL (199 aa)). 11–16 (GAGKSL) contributes to the ATP binding site. The interval 196–410 (PFAYNLSQRQ…EWADSTGWRL (215 aa)) is UPF0157.

It in the N-terminal section; belongs to the CoaE family. The protein in the C-terminal section; belongs to the UPF0157 (GrpB) family.

The protein resides in the cytoplasm. The catalysed reaction is 3'-dephospho-CoA + ATP = ADP + CoA + H(+). Its pathway is cofactor biosynthesis; coenzyme A biosynthesis; CoA from (R)-pantothenate: step 5/5. Catalyzes the phosphorylation of the 3'-hydroxyl group of dephosphocoenzyme A to form coenzyme A. The protein is Dephospho-CoA kinase of Mycobacterium leprae (strain TN).